A 340-amino-acid chain; its full sequence is Replication factor C subunit 3 (340 aa).

Residue Ser2 is modified to N-acetylserine. ATP is bound by residues 16–19 (VEKY), Arg20, Tyr28, 53–61 (GPPGTGKTS), Asn148, and Arg206.

This sequence belongs to the activator 1 small subunits family. In terms of assembly, replication factor C (RFC) is a heteropentamer of subunits RFC1, RFC2, RFC3, RFC4 and RFC5 and forms a complex with POL30/PCNA in the presence of ATP. Component of the RAD24-RFC complex which consists of RAD14, RFC2, RFC3, RFC4 and RFC5 and associates with the checkpoint clamp DDC1:MEC3:RAD17 complex. Component of the ELG1-RFC complex which consists of ELG1, RFC2, RFC3, RFC4 and RFC5. Component of the CTF18-RFC complex, which consists of CTF18, CTF8, DCC1, RFC2, RFC3, RFC4 and RFC5. RFC3 interacts with ECO1 and POL30/PCNA.

It is found in the nucleus. Functionally, component of ATP-dependent clamp loader (RFC and RFC-like) complexes for DNA clamps, such as the POL30/PCNA homotrimer and the checkpoint clamp DDC1:MEC3:RAD17 complex. During a clamp loading circle, the RFC:clamp complex binds to DNA and the recognition of the double-stranded/single-stranded junction stimulates ATP hydrolysis by RFC. The complex presumably provides bipartite ATP sites in which one subunit supplies a catalytic site for hydrolysis of ATP bound to the neighboring subunit. Dissociation of RFC from the clamp leaves the clamp encircling DNA. Component of the replication factor C (RFC or activator 1) complex which loads POL30/PCNA and acts during elongation of primed DNA templates by DNA polymerase delta and epsilon. RFC has an essential but redundant activity in sister chromatid cohesion establishment. Component of the RFC-like complex CTF18-RFC which is required for efficient establishment of chromosome cohesion during S-phase and may load or unload POL30/PCNA. Component of the RFC-like RAD24-RFC complex which loads the checkpoint clamp DDC1:MEC3:RAD17 complex and is involved in DNA repair pathways. Component of the RFC-like ELG1-RFC complex which appears to have a role in DNA replication, replication fork re-start, recombination and repair. RFC3 supplies a catalytic site to the ATP site of RFC4. This Saccharomyces cerevisiae (strain ATCC 204508 / S288c) (Baker's yeast) protein is Replication factor C subunit 3 (RFC3).